We begin with the raw amino-acid sequence, 1136 residues long: Probable phospholipid-transporting ATPase IIB (1136 aa).

The Cytoplasmic segment spans residues 1–145 (MADQIPLYPV…IKNQKYNIFT (145 aa)). Residues 146–166 (FIPGVLYEQFKFFLNLYFLIV) traverse the membrane as a helical segment. Residues 167 to 174 (SCSQFVPA) are Extracellular-facing. Residues 175–195 (LKIGYLYTYWAPLGFVLAVTI) form a helical membrane-spanning segment. The Cytoplasmic portion of the chain corresponds to 196–383 (MREAVDEFRR…LDLELNQLTK (188 aa)). A helical transmembrane segment spans residues 384-404 (ALFLALVALSVVMVTLQGFAG). The Extracellular portion of the chain corresponds to 405–408 (PWYR). Residues 409 to 429 (SLFRFLLLFSYIIPISLRVNL) form a helical membrane-spanning segment. The Cytoplasmic portion of the chain corresponds to 430–939 (DMGKAAYGWM…ALGQFVMHRG (510 aa)). D469 (4-aspartylphosphate intermediate) is an active-site residue. ATP is bound by residues D469, K470, and T471. D469 serves as a coordination point for Mg(2+). A Mg(2+)-binding site is contributed by T471. The disordered stretch occupies residues 514–538 (AGGSSAASTPPRKAPSSAPKVRRSV). ATP contacts are provided by E591, F633, K638, K657, R686, T687, T766, G767, D768, R848, and K854. A Mg(2+)-binding site is contributed by D874. Residues N877 and D878 each contribute to the ATP site. Position 878 (D878) interacts with Mg(2+). A helical membrane pass occupies residues 940–960 (LIISTMQAVFSSVFYFASVPL). Topologically, residues 961-962 (YQ) are extracellular. The chain crosses the membrane as a helical span at residues 963-983 (GFLMVGYATVYTMFPVFSLVL). Over 984 to 1012 (DQDVKPEMAMLYPELYKDLTKGRSLSFKT) the chain is Cytoplasmic. Residues 1013–1033 (FLVWVLISIYQGGILMFGALV) traverse the membrane as a helical segment. Residues 1034–1041 (LFESEFVH) are Extracellular-facing. Residues 1042 to 1062 (VVAISFTALVLTELLMVALTV) traverse the membrane as a helical segment. The Cytoplasmic portion of the chain corresponds to 1063-1066 (RTWH). Residues 1067–1087 (WLMVVAQLLSLGCYVASLAFL) traverse the membrane as a helical segment. At 1088–1098 (NEYFDVAFITT) the chain is on the extracellular side. Residues 1099 to 1119 (VTFVWKVSAITVVSCLPLYVL) traverse the membrane as a helical segment. Topologically, residues 1120–1136 (KYLKRKLSPPSYSKLSS) are cytoplasmic.

This sequence belongs to the cation transport ATPase (P-type) (TC 3.A.3) family. Type IV subfamily. It depends on Mg(2+) as a cofactor.

It localises to the golgi apparatus. The protein localises to the trans-Golgi network membrane. The enzyme catalyses ATP + H2O + phospholipidSide 1 = ADP + phosphate + phospholipidSide 2.. This chain is Probable phospholipid-transporting ATPase IIB (ATP9B), found in Bos taurus (Bovine).